We begin with the raw amino-acid sequence, 274 residues long: Ribosome biogenesis protein UTP30 (274 aa).

The protein belongs to the universal ribosomal protein uL1 family. Highly divergent. Component of the 90S pre-ribosomes. Interacts with FAF1.

It localises to the nucleus. It is found in the nucleolus. Involved in rRNA-processing and ribosome biosynthesis. This chain is Ribosome biogenesis protein UTP30 (UTP30), found in Saccharomyces cerevisiae (strain ATCC 204508 / S288c) (Baker's yeast).